The sequence spans 155 residues: Ribosome maturation factor RimP (155 aa).

This sequence belongs to the RimP family.

The protein localises to the cytoplasm. Functionally, required for maturation of 30S ribosomal subunits. The protein is Ribosome maturation factor RimP of Bacteroides thetaiotaomicron (strain ATCC 29148 / DSM 2079 / JCM 5827 / CCUG 10774 / NCTC 10582 / VPI-5482 / E50).